Here is a 143-residue protein sequence, read N- to C-terminus: Transcriptional regulator MraZ (143 aa).

SpoVT-AbrB domains follow at residues Thr5–Glu47 and Ala76–Ala119.

Belongs to the MraZ family. As to quaternary structure, forms oligomers.

It is found in the cytoplasm. The protein localises to the nucleoid. This chain is Transcriptional regulator MraZ, found in Kocuria rhizophila (strain ATCC 9341 / DSM 348 / NBRC 103217 / DC2201).